The primary structure comprises 321 residues: Pheromone-regulated membrane protein 5 (321 aa).

Residues 35-59 (SSSSSSSSLPLLSNSTSSSIIPSIT) are disordered. Residues 81 to 101 (FIIVGGIAGVIFLAILLWWVI) traverse the membrane as a helical segment. Position 132 is a phosphoserine (Ser132). Residues 241 to 250 (TISSSSASSL) are compositionally biased toward low complexity. The interval 241-321 (TISSSSASSL…HMLEGKEQDE (81 aa)) is disordered. Residues 253–264 (GNEKEVGEDIRK) are compositionally biased toward basic and acidic residues. The span at 279–288 (SPESDGSVNR) shows a compositional bias: polar residues. 3 positions are modified to phosphoserine: Ser282, Ser285, and Ser291. The span at 312 to 321 (HMLEGKEQDE) shows a compositional bias: basic and acidic residues. Lys317 participates in a covalent cross-link: Glycyl lysine isopeptide (Lys-Gly) (interchain with G-Cter in ubiquitin).

This sequence belongs to the PRM5 family.

It is found in the membrane. The polypeptide is Pheromone-regulated membrane protein 5 (PRM5) (Saccharomyces cerevisiae (strain YJM789) (Baker's yeast)).